Consider the following 1390-residue polypeptide: DNA-directed RNA polymerase subunit beta (1390 aa).

This sequence belongs to the RNA polymerase beta chain family. As to quaternary structure, the RNAP catalytic core consists of 2 alpha, 1 beta, 1 beta' and 1 omega subunit. When a sigma factor is associated with the core the holoenzyme is formed, which can initiate transcription.

The enzyme catalyses RNA(n) + a ribonucleoside 5'-triphosphate = RNA(n+1) + diphosphate. Its function is as follows. DNA-dependent RNA polymerase catalyzes the transcription of DNA into RNA using the four ribonucleoside triphosphates as substrates. The polypeptide is DNA-directed RNA polymerase subunit beta (Gluconobacter oxydans (strain 621H) (Gluconobacter suboxydans)).